A 987-amino-acid chain; its full sequence is uncharacterized protein (987 aa).

2 helical membrane-spanning segments follow: residues 12-32 (FIYL…SVSG) and 958-978 (VENN…LGIL).

To M.jannaschii MJ1393 and A.fulgidus AF2028.

The protein resides in the cell membrane. This is an uncharacterized protein from Methanocaldococcus jannaschii (strain ATCC 43067 / DSM 2661 / JAL-1 / JCM 10045 / NBRC 100440) (Methanococcus jannaschii).